Here is a 539-residue protein sequence, read N- to C-terminus: Probable protein kinase UbiB (539 aa).

Residues 23-43 (DLLFALPLPWWMLALRFVLPW) traverse the membrane as a helical segment. A Protein kinase domain is found at 125-492 (RFDEKPLASA…WHDRKDEPVL (368 aa)). ATP-binding positions include 131–139 (LASASVAQV) and Lys153. Asp288 acts as the Proton acceptor in catalysis. 2 consecutive transmembrane segments (helical) span residues 494-514 (LIGAALLVGGAIQGWVMSEAA) and 517-537 (LLTLTAWPAAIMLIAGLYLIV).

Belongs to the ABC1 family. UbiB subfamily.

It is found in the cell inner membrane. Its pathway is cofactor biosynthesis; ubiquinone biosynthesis [regulation]. Is probably a protein kinase regulator of UbiI activity which is involved in aerobic coenzyme Q (ubiquinone) biosynthesis. This Pseudomonas syringae pv. syringae (strain B728a) protein is Probable protein kinase UbiB.